Reading from the N-terminus, the 260-residue chain is MIYKNVEFSAIVTKRKNYRERDMLVTMFTDKYGFKTFFVRGVRKRGFKLGAAILPFTHGTYIGSINSEGLSFITATKGIDQFQSINQDIILNAYATYILELVKAAFEDSIDVTNTLWFEKVLKALSLINDGFDAQIIANIIEVQLLGKFGVQPNWRSCVICGETQSQFDYSESYGGILCRKHWYMDKNRLNLDQRTMYYLRKFSIVDLNYLNSIKVNADTKKKLKLTLNEIYDNQVGIYVKARSFIDKMTKVENNLLKKD.

It belongs to the RecO family.

Involved in DNA repair and RecF pathway recombination. This Ligilactobacillus salivarius (strain UCC118) (Lactobacillus salivarius) protein is DNA repair protein RecO.